A 342-amino-acid chain; its full sequence is Alpha-(1,3)-fucosyltransferase 7 (342 aa).

The Cytoplasmic portion of the chain corresponds to 1–14 (MNNAGHGPTRRLRG). A helical; Signal-anchor for type II membrane protein membrane pass occupies residues 15–36 (LGVLAGVALLAALWLLWLLGSA). At 37-342 (PRGTPAPQPT…YEDLEGWFQA (306 aa)) the chain is on the lumenal side. A disulfide bridge connects residues Cys-68 and Cys-76. N-linked (GlcNAc...) asparagine glycosylation occurs at Asn-81. Cys-211 and Cys-214 are joined by a disulfide. A glycan (N-linked (GlcNAc...) asparagine) is linked at Asn-291. Cysteines 318 and 321 form a disulfide.

The protein belongs to the glycosyltransferase 10 family. Post-translationally, N-glycosylated. In terms of tissue distribution, leukocytic/myeloid lineage cells.

Its subcellular location is the golgi apparatus. The protein localises to the golgi stack membrane. The catalysed reaction is an N-acetyl-alpha-neuraminyl-(2-&gt;3)-beta-D-galactosyl-(1-&gt;4)-N-acetyl-beta-D-glucosaminyl derivative + GDP-beta-L-fucose = an alpha-Neu5Ac-(2-&gt;3)-beta-D-Gal-(1-&gt;4)-[alpha-L-Fuc-(1-&gt;3)]-beta-D-GlcNAc derivative + GDP + H(+). It catalyses the reaction a neolactoside IV(3)-alpha-NeuAc-nLc4Cer + GDP-beta-L-fucose = a neolactoside IV(3)-alpha-NeuNAc,III(3)-alpha-Fuc-nLc4Cer + GDP + H(+). The enzyme catalyses a neolactoside VI(3)-alpha-NeuNAc-nLc6Cer + GDP-beta-L-fucose = a neolactoside VI(3)-alpha-NeuAc,V(3)-alphaFuc-nLc6Cer + GDP + H(+). It carries out the reaction an alpha-Neu5Ac-(2-&gt;3)-beta-D-Gal-(1-&gt;4)-beta-D-GlcNAc-(1-&gt;3)-beta-D-Gal-(1-&gt;4)-[alpha-L-Fuc-(1-&gt;3)]-beta-D-GlcNAc derivative + GDP-beta-L-fucose = an alpha-Neu5Ac-(2-&gt;3)-beta-D-Gal-(1-&gt;4)-[alpha-L-Fuc-(1-&gt;3)]-beta-D-GlcNAc-(1-&gt;3)-beta-D-Gal-(1-&gt;4)-[alpha-L-Fuc-(1-&gt;3)]-beta-D-GlcNAc derivative + GDP + H(+). The catalysed reaction is an alpha-Neu5Ac-(2-&gt;3)-beta-D-Gal-(1-&gt;4)-beta-D-GlcNAc6S derivative + GDP-beta-L-fucose = an alpha-Neu5Ac-(2-&gt;3)-beta-D-Gal-(1-&gt;4)-[alpha-L-Fuc-(1-&gt;3)]-beta-D-GlcNAc6S derivative + GDP + H(+). It catalyses the reaction alpha-Neu5Ac-(2-&gt;3)-beta-D-Gal-(1-&gt;4)-beta-D-GlcNAc-(1-&gt;3)-beta-D-Gal-(1-&gt;4)-D-Glc + GDP-beta-L-fucose = alpha-Neu5Ac-(2-&gt;3)-beta-D-Gal-(1-&gt;4)-[alpha-L-Fuc-(1-&gt;3)]-beta-D-GlcNAc-(1-&gt;3)-beta-D-Gal-(1-&gt;4)-D-Glc + GDP + H(+). The enzyme catalyses alpha-Neu5Ac-(2-&gt;3)-beta-D-Gal-(1-&gt;4)-beta-D-GlcNAc-(1-&gt;3)-beta-D-Gal-(1-&gt;4)-[alpha-L-Fuc-(1-&gt;3)]-beta-D-GlcNAc-(1-&gt;3)-beta-D-Gal-(1-&gt;4)-beta-D-GlcNAc + GDP-beta-L-fucose = alpha-Neu5Ac-(2-&gt;3)-beta-D-Gal-(1-&gt;4)-[alpha-L-Fuc-(1-&gt;3)]-beta-D-GlcNAc-(1-&gt;3)-beta-D-Gal-(1-&gt;4)-[alpha-L-Fuc-(1-&gt;3)]-beta-D-GlcNAc-(1-&gt;3)-beta-D-Gal-(1-&gt;4)-beta-D-GlcNAc + GDP + H(+). It carries out the reaction alpha-Neu5Ac-(2-&gt;3)-beta-D-Gal-(1-&gt;4)-beta-D-GlcNAc-(1-&gt;3)-beta-D-Gal-(1-&gt;4)-beta-D-GlcNAc-(1-&gt;3)-beta-D-Gal-(1-&gt;4)-beta-D-GlcNAc + GDP-beta-L-fucose = alpha-Neu5Ac-(2-&gt;3)-beta-D-Gal-(1-&gt;4)-[alpha-L-Fuc-(1-&gt;3)]-beta-D-GlcNAc-(1-&gt;3)-beta-D-Gal-(1-&gt;4)-beta-D-GlcNAc-(1-&gt;3)-beta-D-Gal-(1-&gt;4)-beta-D-GlcNAc + GDP + H(+). The protein operates within protein modification; protein glycosylation. Inhibited by NaCl. Inhibited by GDP in a concentration dependent manner, with an IC(50) value of 93 uM. Also inhibited by GMP and GTP. Inhibited by N-ethylmaleimide. Activated by poly(ethylene glycol) by enhancing the thermal stability of FUT7. Activated by Mn2+, Ca2+, and Mg2+. Both panosialin A and B inhibit activity with IC(50) values of 4.8 and 5.3 ug/ml, respectively. Inhibited by gallic acid (GA) and (-)-epigallocatechin gallate (EGCG) in a time-dependent and irreversible manner with IC(50) values of 60 and 700 nM, respectively. Catalyzes the transfer of L-fucose, from a guanosine diphosphate-beta-L-fucose, to the N-acetyl glucosamine (GlcNAc) of a distal alpha2,3 sialylated lactosamine unit of a glycoprotein or a glycolipid-linked sialopolylactosamines chain through an alpha-1,3 glycosidic linkage and participates in the final fucosylation step in the biosynthesis of the sialyl Lewis X (sLe(x)), a carbohydrate involved in cell and matrix adhesion during leukocyte trafficking and fertilization. In vitro, also synthesizes sialyl-dimeric-Lex structures, from VIM-2 structures and both di-fucosylated and trifucosylated structures from mono-fucosylated precursors. However does not catalyze alpha 1-3 fucosylation when an internal alpha 1-3 fucosylation is present in polylactosamine chain and the fucosylation rate of the internal GlcNAc residues is reduced once fucose has been added to the distal GlcNAc. Also catalyzes the transfer of a fucose from GDP-beta-fucose to the 6-sulfated a(2,3)sialylated substrate to produce 6-sulfo sLex mediating significant L-selectin-dependent cell adhesion. Through sialyl-Lewis(x) biosynthesis, can control SELE- and SELP-mediated cell adhesion with leukocytes and allows leukocytes tethering and rolling along the endothelial tissue thereby enabling the leukocytes to accumulate at a site of inflammation. May enhance embryo implantation through sialyl Lewis X (sLeX)-mediated adhesion of embryo cells to endometrium. May affect insulin signaling by up-regulating the phosphorylation and expression of some signaling molecules involved in the insulin-signaling pathway through SLe(x) which is present on the glycans of the INSRR alpha subunit. This is Alpha-(1,3)-fucosyltransferase 7 from Homo sapiens (Human).